Reading from the N-terminus, the 529-residue chain is Listeriolysin O (529 aa).

The first 24 residues, 1–24, serve as a signal peptide directing secretion; sequence MKKIMLVFITLILVSLPIAQQTEA. Beta stranded transmembrane passes span 214–227, 234–243, 312–321, and 329–341; these read ESQL…AFKA, VNFGAISEGK, STKVKAAFDA, and SGDV…IKNS. Positions 483–493 match the Conserved undecapeptide motif; the sequence is ECTGLAWEWWR. A Cholesterol binding motif is present at residues 515–516; it reads TL.

This sequence belongs to the cholesterol-dependent cytolysin family. Homooligomeric pore complex of 35 to 50 subunits; when inserted in the host membrane.

The protein localises to the secreted. It localises to the host membrane. Its subcellular location is the host cell membrane. Activity of listeriolysin O is regulated on multiple levels. It should be high in the phagosome, thereby allowing escape of the bacteria from the phagosomal compartment. Then, once inside the host cytosol, the activity must be controlled to prevent lysis of the host plasma membrane and loss of the intracellular environment. A cholesterol-dependent toxin that causes cytolysis by forming pores in cholesterol containing host membranes. After binding to target membranes, the protein undergoes a major conformation change, leading to its insertion in the host membrane and formation of an oligomeric pore complex. Cholesterol is required for binding to host membranes, membrane insertion and pore formation; cholesterol binding is mediated by a Thr-Leu pair in the C-terminus. Acts as a major virulence factor required for the escape of bacteria from phagosomal vacuoles and entry into the host cytosol. Can be reversibly inactivated by oxidation. In Listeria monocytogenes serotype 4b (strain CLIP80459), this protein is Listeriolysin O (hly).